The primary structure comprises 511 residues: MITLKTIKKKYNIEQKNTKLSIGIDFGTTYSLVASALEDNIYIILDQNNRALLPSIINYTSKKPIVGWEAQKQAINDPKNTIISIKRLIGHSYDEINKLYPNLPYHLTYDKNGILSFIVQDNLINTINVSSEIFKTLKNRVNTIFNQKILGAVITVPAHFNDLQRQEIKKSAELANLNIIRLLNEPTSAAIAYGLHLNKNKIVAIYDLGGGTFDISILKLNQGIFEVLATSGNTNLGGDDFDQLLVNYIQKKTHFSYSKLDFIFQRKLLYLAKSIKIKLTSHNSVQFQFNNSKMHTITRFEFEKMIEPLILKTLNICQHVLHDSNTNLTHIEEIILVGGSTNIPIVQRKVSDFFKQLPLCTINPEQVVVAGAAIQANMLTNGSKYNNFILLDVVPLSLGIEVIGNIVEKIILKNTPLPISKTKTFTTFKDKQTTMLIHVLQGEHKLVNKCQSLCRFVLKEIPKKPAGKIIVLVNFQIDVNGLLSVTAEIKSTKIRKNITVNASIPIKKYRN.

It belongs to the heat shock protein 70 family.

Chaperone involved in the maturation of iron-sulfur cluster-containing proteins. Has a low intrinsic ATPase activity which is markedly stimulated by HscB. Involved in the maturation of IscU. This chain is Chaperone protein HscA (hscA), found in Buchnera aphidicola subsp. Baizongia pistaciae (strain Bp).